The following is a 423-amino-acid chain: Histidine--tRNA ligase (423 aa).

This sequence belongs to the class-II aminoacyl-tRNA synthetase family. Homodimer.

The protein localises to the cytoplasm. The enzyme catalyses tRNA(His) + L-histidine + ATP = L-histidyl-tRNA(His) + AMP + diphosphate + H(+). The chain is Histidine--tRNA ligase from Rhodococcus erythropolis (strain PR4 / NBRC 100887).